A 387-amino-acid chain; its full sequence is Cell surface GPI-anchored protein ARB_01627 (387 aa).

The signal sequence occupies residues 1–19 (MAITKYLVSALAVAGLAFA). 8 N-linked (GlcNAc...) asparagine glycosylation sites follow: asparagine 73, asparagine 175, asparagine 201, asparagine 206, asparagine 231, asparagine 236, asparagine 253, and asparagine 270. The segment covering 338–361 (TCRERQEKPKTGDDHSGGDEEGHK) has biased composition (basic and acidic residues). The interval 338-362 (TCRERQEKPKTGDDHSGGDEEGHKG) is disordered. A lipid anchor (GPI-anchor amidated alanine) is attached at alanine 364. Positions 365–387 (AAFAKAPAAALLIAFVGALQFFL) are cleaved as a propeptide — removed in mature form.

Belongs to the SPS2 family. The GPI-anchor is attached to the protein in the endoplasmic reticulum and serves to target the protein to the cell surface. There, the glucosamine-inositol phospholipid moiety is cleaved off and the GPI-modified mannoprotein is covalently attached via its lipidless GPI glycan remnant to the 1,6-beta-glucan of the outer cell wall layer.

The protein localises to the cell membrane. It is found in the secreted. It localises to the cell wall. Its function is as follows. Required for proper cell wall integrity and for the correct assembly of the mannoprotein outer layer of the cell wall. The protein is Cell surface GPI-anchored protein ARB_01627 of Arthroderma benhamiae (strain ATCC MYA-4681 / CBS 112371) (Trichophyton mentagrophytes).